Here is a 164-residue protein sequence, read N- to C-terminus: Crossover junction endodeoxyribonuclease RuvC (164 aa).

Active-site residues include aspartate 7, glutamate 67, and aspartate 139. Residues aspartate 7, glutamate 67, and aspartate 139 each contribute to the Mg(2+) site.

This sequence belongs to the RuvC family. As to quaternary structure, homodimer which binds Holliday junction (HJ) DNA. The HJ becomes 2-fold symmetrical on binding to RuvC with unstacked arms; it has a different conformation from HJ DNA in complex with RuvA. In the full resolvosome a probable DNA-RuvA(4)-RuvB(12)-RuvC(2) complex forms which resolves the HJ. The cofactor is Mg(2+).

It localises to the cytoplasm. It carries out the reaction Endonucleolytic cleavage at a junction such as a reciprocal single-stranded crossover between two homologous DNA duplexes (Holliday junction).. Functionally, the RuvA-RuvB-RuvC complex processes Holliday junction (HJ) DNA during genetic recombination and DNA repair. Endonuclease that resolves HJ intermediates. Cleaves cruciform DNA by making single-stranded nicks across the HJ at symmetrical positions within the homologous arms, yielding a 5'-phosphate and a 3'-hydroxyl group; requires a central core of homology in the junction. The consensus cleavage sequence is 5'-(A/T)TT(C/G)-3'. Cleavage occurs on the 3'-side of the TT dinucleotide at the point of strand exchange. HJ branch migration catalyzed by RuvA-RuvB allows RuvC to scan DNA until it finds its consensus sequence, where it cleaves and resolves the cruciform DNA. The chain is Crossover junction endodeoxyribonuclease RuvC from Geobacter sp. (strain M21).